A 132-amino-acid polypeptide reads, in one-letter code: L-ectoine synthase (132 aa).

This sequence belongs to the ectoine synthase family.

The enzyme catalyses (2S)-4-acetamido-2-aminobutanoate = L-ectoine + H2O. The protein operates within amine and polyamine biosynthesis; ectoine biosynthesis; L-ectoine from L-aspartate 4-semialdehyde: step 3/3. Its function is as follows. Catalyzes the circularization of gamma-N-acetyl-alpha,gamma-diaminobutyric acid (ADABA) to ectoine (1,4,5,6-tetrahydro-2-methyl-4-pyrimidine carboxylic acid), which is an excellent osmoprotectant. This is L-ectoine synthase from Bordetella avium (strain 197N).